Consider the following 312-residue polypeptide: Olfactory receptor 6B2 (312 aa).

The Extracellular segment spans residues Met-1–Tyr-25. A glycan (N-linked (GlcNAc...) asparagine) is linked at Asn-5. A helical membrane pass occupies residues Leu-26–Ile-46. The Cytoplasmic portion of the chain corresponds to Leu-47–Ser-54. The helical transmembrane segment at Leu-55–Ser-75 threads the bilayer. Residues Asp-76–Thr-99 lie on the Extracellular side of the membrane. Residues Cys-97 and Cys-189 are joined by a disulfide bond. A helical transmembrane segment spans residues Gln-100–Tyr-120. Topologically, residues Asp-121 to Gly-139 are cytoplasmic. Residues Leu-140–Val-160 traverse the membrane as a helical segment. At Cys-161 to Glu-196 the chain is on the extracellular side. The chain crosses the membrane as a helical span at residues Leu-197–Ser-217. The Cytoplasmic segment spans residues Tyr-218–Ala-237. The chain crosses the membrane as a helical span at residues Phe-238–Met-258. Over Tyr-259 to Asn-271 the chain is Extracellular. A helical transmembrane segment spans residues Lys-272–Leu-292. Residues Arg-293–His-312 lie on the Cytoplasmic side of the membrane.

The protein belongs to the G-protein coupled receptor 1 family.

It localises to the cell membrane. In terms of biological role, odorant receptor. This chain is Olfactory receptor 6B2 (OR6B2), found in Homo sapiens (Human).